A 595-amino-acid chain; its full sequence is Tectonic-3 (595 aa).

An N-terminal signal peptide occupies residues 1–22; it reads MCTLQLHLLLLVVLMLSETARP. The segment at 23–62 is disordered; that stretch reads QPSSTARAFPTSWGLEPVTPEVPTSAPPDSSESPTPWTLS. Over 23-575 the chain is Extracellular; sequence QPSSTARAFP…ALSRGASVQK (553 aa). A compositionally biased stretch (polar residues) spans 49–62; that stretch reads PPDSSESPTPWTLS. Residues Asn-167 and Asn-336 are each glycosylated (N-linked (GlcNAc...) asparagine). A helical transmembrane segment spans residues 576 to 594; it reads DSLVLILCVLLLGLLNSQT. Position 595 (Lys-595) is a topological domain, cytoplasmic.

It belongs to the tectonic family. In terms of assembly, part of the tectonic-like complex (also named B9 complex).

The protein resides in the membrane. Its function is as follows. Part of the tectonic-like complex which is required for tissue-specific ciliogenesis and may regulate ciliary membrane composition. May be involved in apoptosis regulation. Necessary for signal transduction through the sonic hedgehog (Shh) signaling pathway. The protein is Tectonic-3 (Tctn3) of Mus musculus (Mouse).